An 891-amino-acid chain; its full sequence is Fanconi-associated nuclease 1 homolog (891 aa).

The Mn(2+) site is built by E712, D833, E852, and V853. The VRR-NUC domain maps to 770–884 (GMAEEILIIS…GFNVEICKVR (115 aa)).

Belongs to the FAN1 family. The cofactor is Mn(2+). Requires Mg(2+) as cofactor.

It is found in the nucleus. It carries out the reaction Hydrolytically removes 5'-nucleotides successively from the 3'-hydroxy termini of 3'-hydroxy-terminated oligonucleotides.. Nuclease required for the repair of DNA interstrand cross-links (ICLs). Acts as a 5'-3' exonuclease that anchors at a cut end of DNA and cleaves DNA successively at every third nucleotide, allowing to excise an ICL from one strand through flanking incisions. May act upstream of the helicase RECQL4A and the ATPase RAD5A, which is involved in error-free post-replicative repair. Functions independently of MUS81 pathway, but in a similar pathway with RECQ4A, RAD5A and MFH1 in ICL repair. The chain is Fanconi-associated nuclease 1 homolog from Arabidopsis thaliana (Mouse-ear cress).